The chain runs to 244 residues: Triosephosphate isomerase (244 aa).

9 to 11 (NWK) contacts substrate. His93 (electrophile) is an active-site residue. The Proton acceptor role is filled by Glu160. Residues Gly166 and Ser206 each contribute to the substrate site.

Belongs to the triosephosphate isomerase family. In terms of assembly, homodimer.

Its subcellular location is the cytoplasm. The catalysed reaction is D-glyceraldehyde 3-phosphate = dihydroxyacetone phosphate. It participates in carbohydrate biosynthesis; gluconeogenesis. The protein operates within carbohydrate degradation; glycolysis; D-glyceraldehyde 3-phosphate from glycerone phosphate: step 1/1. Functionally, involved in the gluconeogenesis. Catalyzes stereospecifically the conversion of dihydroxyacetone phosphate (DHAP) to D-glyceraldehyde-3-phosphate (G3P). The sequence is that of Triosephosphate isomerase from Mycoplasma pneumoniae (strain ATCC 29342 / M129 / Subtype 1) (Mycoplasmoides pneumoniae).